A 130-amino-acid polypeptide reads, in one-letter code: Ribonuclease pancreatic (130 aa).

The N-terminal stretch at 1 to 6 (VQPSLG) is a signal peptide. Substrate is bound by residues lysine 13 and arginine 16. The active-site Proton acceptor is the histidine 18. 4 disulfide bridges follow: cysteine 32–cysteine 90, cysteine 46–cysteine 101, cysteine 64–cysteine 116, and cysteine 71–cysteine 78. A glycan (N-linked (GlcNAc...) asparagine) is linked at asparagine 40. Residues 47 to 51 (KPVNT), lysine 72, and arginine 91 each bind substrate. Histidine 125 serves as the catalytic Proton donor.

Belongs to the pancreatic ribonuclease family. As to quaternary structure, monomer. Interacts with and forms tight 1:1 complexes with RNH1. Dimerization of two such complexes may occur. Interaction with RNH1 inhibits this protein. Pancreas.

The protein localises to the secreted. It carries out the reaction an [RNA] containing cytidine + H2O = an [RNA]-3'-cytidine-3'-phosphate + a 5'-hydroxy-ribonucleotide-3'-[RNA].. The enzyme catalyses an [RNA] containing uridine + H2O = an [RNA]-3'-uridine-3'-phosphate + a 5'-hydroxy-ribonucleotide-3'-[RNA].. Its function is as follows. Endonuclease that catalyzes the cleavage of RNA on the 3' side of pyrimidine nucleotides. Acts on single-stranded and double-stranded RNA. This Cricetulus griseus (Chinese hamster) protein is Ribonuclease pancreatic (RNASE1).